Reading from the N-terminus, the 85-residue chain is Small ribosomal subunit protein bS16 (85 aa).

It belongs to the bacterial ribosomal protein bS16 family.

The protein is Small ribosomal subunit protein bS16 of Clostridium novyi (strain NT).